The chain runs to 133 residues: Nickel-responsive regulator (133 aa).

The Ni(2+) site is built by His-76, His-87, His-89, and Cys-95.

It belongs to the transcriptional regulatory CopG/NikR family. Homotetramer. Ni(2+) is required as a cofactor.

Its function is as follows. Transcriptional repressor of the nikABCDE operon. Is active in the presence of excessive concentrations of intracellular nickel. The chain is Nickel-responsive regulator from Salmonella choleraesuis (strain SC-B67).